We begin with the raw amino-acid sequence, 1665 residues long: Cortactin-binding protein 2 (1665 aa).

Disordered regions lie at residues 1–23, 201–235, 360–441, 455–480, and 499–617; these read MATD…AGAT, EEKK…SEFD, ASHG…LHPG, GNAN…PTSR, and RFTS…PKPS. Residues 120 to 276 are a coiled coil; it reads KMQERMSTQL…EQLKRGNDNK (157 aa). The span at 385-395 shows a compositional bias: polar residues; the sequence is GPSTGSTADLT. Residue Arg-499 is modified to Asymmetric dimethylarginine. Positions 584–594 are enriched in polar residues; sequence TVASPPSSLPQ. 6 ANK repeats span residues 710-740, 744-773, 777-806, 810-839, 843-872, and 914-944; these read GRPT…DINY, DGHS…QVDA, NGFT…NINH, GGQT…DRSI, DGWT…PAHG, and EGWT…EPER. Residues 1447 to 1484 form a disordered region; the sequence is CSKKKGESGAWRKVSTSPRKKSSRFSSPTWNKPDLSEE. A Phosphoserine modification is found at Ser-1526. Over residues 1544 to 1562 the composition is skewed to basic and acidic residues; the sequence is SESDISKIADSRDDLRRFD. Residues 1544 to 1648 are disordered; that stretch reads SESDISKIAD…RQIEINNNSK (105 aa). Composition is skewed to polar residues over residues 1564 to 1576 and 1584 to 1604; these read PGNN…TVNN and KEVS…QSKT. Residues 1626 to 1640 are compositionally biased toward low complexity; it reads SQNTKRSSSSSNTRQ.

Interacts with CTTN/cortactin SH3 domain. Interacts with STRN, STRN4/zinedin and MOB4/phocein; this interactions mediate the association with the STRIPAK core complex and may regulate dendritic spine distribution of the STRIPAK complex in hippocampal neurons. Activation of glutamate receptors weakens the interaction with STRN and STRN4.

It is found in the cytoplasm. Its subcellular location is the cell cortex. The protein resides in the cell projection. It localises to the dendritic spine. In terms of biological role, regulates the dendritic spine distribution of CTTN/cortactin in hippocampal neurons, and thus controls dendritic spinogenesis and dendritic spine maintenance. Associates with the striatin-interacting phosphatase and kinase (STRIPAK) core complex to regulate dendritic spine distribution of the STRIPAK complex in hippocampal neurons. This is Cortactin-binding protein 2 (CTTNBP2) from Equus caballus (Horse).